The sequence spans 405 residues: MYHLKCIECGAEYSRDEVIYTCSKCDGLLDVIYDYSSIKIDMEKLKTECPSVWKYAKLLPVEREPVTIQEGGTPLYKCDRLAEKIGIKKLYVKHEGMNPTGSFKDRGMTVGVTKALELGMNTVACASTGNTSAALAIYGAKAGIPVVVLLPAGKVALGKVAQALMHGAKVLSIRGNFDDALALVRTLCSQEKIYLLNSINPYRLEGQKTIGFEIADQLDFKVPDRIVLPVGNAGNITAIYKGFREFKILGITDSLPKMTGIQAEGSCPIVKAIKSGAPAITPEENPETVATAIRIGNPVNATKALSAIRESGGTAESVTDEEILAAQKDLARLEGIGVEPASAASVAGLRKLVDMGVIGRDETVVCITTGHLLKDPQTVIDVCEEPTVVDANIDAIREAIFGKAK.

Lys104 carries the post-translational modification N6-(pyridoxal phosphate)lysine. Residues Asn130, 231–235, and Thr369 contribute to the pyridoxal 5'-phosphate site; that span reads GNAGN.

This sequence belongs to the threonine synthase family. As to quaternary structure, homotrimer. The cofactor is pyridoxal 5'-phosphate.

It carries out the reaction O-phospho-L-homoserine + H2O = L-threonine + phosphate. Its pathway is amino-acid biosynthesis; L-threonine biosynthesis; L-threonine from L-aspartate: step 5/5. Catalyzes the gamma-elimination of phosphate from L-phosphohomoserine and the beta-addition of water to produce L-threonine. Does not catalyze the conversion of O-acetyl-L-homoserine into threonine. The sequence is that of Threonine synthase (thrC) from Methanosarcina acetivorans (strain ATCC 35395 / DSM 2834 / JCM 12185 / C2A).